A 233-amino-acid chain; its full sequence is Protein-methionine-sulfoxide reductase heme-binding subunit MsrQ (233 aa).

Helical transmembrane passes span I13–W33, A44–S64, M81–D101, P117–S137, S151–V171, and V174–V194. The Ferric oxidoreductase domain occupies G50–V164.

This sequence belongs to the MsrQ family. As to quaternary structure, heterodimer of a catalytic subunit (MsrP) and a heme-binding subunit (MsrQ).

The protein localises to the cell inner membrane. Part of the MsrPQ system that repairs oxidized periplasmic proteins containing methionine sulfoxide residues (Met-O), using respiratory chain electrons. Thus protects these proteins from oxidative-stress damage caused by reactive species of oxygen and chlorine generated by the host defense mechanisms. MsrPQ is essential for the maintenance of envelope integrity under bleach stress, rescuing a wide series of structurally unrelated periplasmic proteins from methionine oxidation. MsrQ provides electrons for reduction to the reductase catalytic subunit MsrP, using the quinone pool of the respiratory chain. Probably involved in protection against reactive chlorine species (RCS) generated by chlorite and hypochlorite. The polypeptide is Protein-methionine-sulfoxide reductase heme-binding subunit MsrQ (Azospira oryzae (strain ATCC BAA-33 / DSM 13638 / PS) (Dechlorosoma suillum)).